Consider the following 453-residue polypeptide: Aldehyde dehydrogenase, dimeric NADP-preferring (453 aa).

N-acetylserine is present on Ser-2. The residue at position 178 (Lys-178) is an N6-acetyllysine. Position 188–193 (188–193) interacts with NAD(+); it reads GSTAVG. At Lys-194 the chain carries N6-acetyllysine. Catalysis depends on residues Glu-210 and Cys-244.

Belongs to the aldehyde dehydrogenase family. Homodimer.

Its subcellular location is the cytoplasm. The catalysed reaction is an aldehyde + NAD(+) + H2O = a carboxylate + NADH + 2 H(+). It carries out the reaction octanal + NAD(+) + H2O = octanoate + NADH + 2 H(+). Its function is as follows. ALDHs play a major role in the detoxification of alcohol-derived acetaldehyde. They are involved in the metabolism of corticosteroids, biogenic amines, neurotransmitters, and lipid peroxidation. Oxidizes medium and long chain aldehydes into non-toxic fatty acids. Preferentially oxidizes aromatic aldehyde substrates. Comprises about 50 percent of corneal epithelial soluble proteins. May play a role in preventing corneal damage caused by ultraviolet light. The polypeptide is Aldehyde dehydrogenase, dimeric NADP-preferring (Aldh3a1) (Rattus norvegicus (Rat)).